Reading from the N-terminus, the 424-residue chain is Protein shisa-9 (424 aa).

Residues 1 to 23 (MRRVLRLLLGCFLTELCARMCRA) form the signal peptide. The Extracellular segment spans residues 24-149 (QERSGHGQLA…DPLHDPTKDK (126 aa)). Residues asparagine 45, asparagine 89, and asparagine 116 are each glycosylated (N-linked (GlcNAc...) asparagine). Residues 150–170 (TNLIVYIICGVVAVMVLVGIF) traverse the membrane as a helical segment. At 171-424 (TKLGLEKAHR…ITNSKTEVTV (254 aa)) the chain is on the cytoplasmic side. Disordered regions lie at residues 333–373 (PRAF…TWDP) and 389–424 (LGIA…EVTV). 2 stretches are compositionally biased toward polar residues: residues 362 to 373 (YNSTANFKTWDP) and 402 to 424 (TRTQ…EVTV).

This sequence belongs to the shisa family. SHISA9 subfamily. As to quaternary structure, component of some AMPA receptors (ionotropic glutamate receptors) complex, at least composed of some AMPA receptor (GRIA1, GRIA2 and/or GRIA3), CACNG2 and SHISA9, as well as low level of DLG4. In terms of tissue distribution, brain-specific. Mainly expressed in neurons, including in hippocampus, cerebral cortex, striatum, thalamus, olfactory bulb and cerebellum. Expressed in most brain structures during embryonic and postnatal development.

It is found in the cell projection. It localises to the dendritic spine membrane. Its subcellular location is the synapse. Its function is as follows. Regulator of short-term neuronal synaptic plasticity in the dentate gyrus. Associates with AMPA receptors (ionotropic glutamate receptors) in synaptic spines and promotes AMPA receptor desensitization at excitatory synapses. This chain is Protein shisa-9 (Shisa9), found in Mus musculus (Mouse).